Reading from the N-terminus, the 185-residue chain is Large ribosomal subunit protein uL5m (185 aa).

This sequence belongs to the universal ribosomal protein uL5 family.

The protein localises to the mitochondrion. This chain is Large ribosomal subunit protein uL5m (RPL5), found in Brassica napus (Rape).